Reading from the N-terminus, the 497-residue chain is Cytochrome P450 2D19 (497 aa).

Residue cysteine 443 participates in heme binding.

It belongs to the cytochrome P450 family. The cofactor is heme.

The protein resides in the endoplasmic reticulum membrane. Its subcellular location is the microsome membrane. It catalyses the reaction an organic molecule + reduced [NADPH--hemoprotein reductase] + O2 = an alcohol + oxidized [NADPH--hemoprotein reductase] + H2O + H(+). Responsible for the metabolism of many drugs and environmental chemicals that it oxidizes. The polypeptide is Cytochrome P450 2D19 (CYP2D19) (Callithrix jacchus (White-tufted-ear marmoset)).